The following is a 103-amino-acid chain: Thrombin inhibitor rhodniin (103 aa).

Kazal-like domains are found at residues 1-50 and 51-103; these read EGGE…PCEP and DEDE…PCRT. 6 cysteine pairs are disulfide-bonded: Cys-6–Cys-31, Cys-8–Cys-27, Cys-16–Cys-48, Cys-57–Cys-84, Cys-60–Cys-80, and Cys-69–Cys-101.

The protein localises to the secreted. In terms of biological role, thrombin-specific inhibitor. Appears to form 1:1 complexes with thrombin. Prevents blood clotting to allow the insect to feed on blood. The polypeptide is Thrombin inhibitor rhodniin (Rhodnius prolixus (Triatomid bug)).